Here is a 183-residue protein sequence, read N- to C-terminus: Auxin-responsive protein IAA20 (183 aa).

2 disordered regions span residues 1–23 (MELE…TATA) and 42–77 (GFEE…NKRR). The EAR-like (transcriptional repression) signature appears at 3–7 (LELGL). The PB1 domain maps to 98 to 183 (GGYVKVKMEG…KSVKRLKILV (86 aa)).

Belongs to the Aux/IAA family. As to quaternary structure, homodimers and heterodimers. Expressed at very low levels in etiolated seedlings and flowers.

The protein resides in the nucleus. In terms of biological role, aux/IAA proteins are short-lived transcriptional factors that function as repressors of early auxin response genes at low auxin concentrations. The sequence is that of Auxin-responsive protein IAA20 (IAA20) from Oryza sativa subsp. japonica (Rice).